Reading from the N-terminus, the 229-residue chain is Cytochrome c oxidase subunit 2 (229 aa).

Over 1–26 the chain is Mitochondrial intermembrane; sequence MSTWANLGLQDSASPLMEQLIFFHDH. A helical transmembrane segment spans residues 27-48; the sequence is ALLILVMITVLVGYLMFMLFFN. At 49 to 62 the chain is on the mitochondrial matrix side; it reads SYVNRFLLHGQLIE. Residues 63 to 82 traverse the membrane as a helical segment; sequence MIWTILPAIILLFIAMPSLR. The Mitochondrial intermembrane segment spans residues 83-229; sequence LLYLLDEINE…IKWISNSVNS (147 aa). The Cu cation site is built by histidine 161, cysteine 196, glutamate 198, cysteine 200, histidine 204, and methionine 207. Residue glutamate 198 coordinates Mg(2+).

It belongs to the cytochrome c oxidase subunit 2 family. Component of the cytochrome c oxidase (complex IV, CIV), a multisubunit enzyme composed of a catalytic core of 3 subunits and several supernumerary subunits. The complex exists as a monomer or a dimer and forms supercomplexes (SCs) in the inner mitochondrial membrane with ubiquinol-cytochrome c oxidoreductase (cytochrome b-c1 complex, complex III, CIII). The cofactor is Cu cation.

The protein localises to the mitochondrion inner membrane. It carries out the reaction 4 Fe(II)-[cytochrome c] + O2 + 8 H(+)(in) = 4 Fe(III)-[cytochrome c] + 2 H2O + 4 H(+)(out). In terms of biological role, component of the cytochrome c oxidase, the last enzyme in the mitochondrial electron transport chain which drives oxidative phosphorylation. The respiratory chain contains 3 multisubunit complexes succinate dehydrogenase (complex II, CII), ubiquinol-cytochrome c oxidoreductase (cytochrome b-c1 complex, complex III, CIII) and cytochrome c oxidase (complex IV, CIV), that cooperate to transfer electrons derived from NADH and succinate to molecular oxygen, creating an electrochemical gradient over the inner membrane that drives transmembrane transport and the ATP synthase. Cytochrome c oxidase is the component of the respiratory chain that catalyzes the reduction of oxygen to water. Electrons originating from reduced cytochrome c in the intermembrane space (IMS) are transferred via the dinuclear copper A center (CU(A)) of subunit 2 and heme A of subunit 1 to the active site in subunit 1, a binuclear center (BNC) formed by heme A3 and copper B (CU(B)). The BNC reduces molecular oxygen to 2 water molecules using 4 electrons from cytochrome c in the IMS and 4 protons from the mitochondrial matrix. The protein is Cytochrome c oxidase subunit 2 (mt:CoII) of Drosophila ambigua (Fruit fly).